The sequence spans 344 residues: Phenylalanine--tRNA ligase alpha subunit (344 aa).

Position 256 (Glu256) interacts with Mg(2+).

This sequence belongs to the class-II aminoacyl-tRNA synthetase family. Phe-tRNA synthetase alpha subunit type 1 subfamily. As to quaternary structure, tetramer of two alpha and two beta subunits. It depends on Mg(2+) as a cofactor.

It localises to the cytoplasm. The enzyme catalyses tRNA(Phe) + L-phenylalanine + ATP = L-phenylalanyl-tRNA(Phe) + AMP + diphosphate + H(+). The protein is Phenylalanine--tRNA ligase alpha subunit of Oceanobacillus iheyensis (strain DSM 14371 / CIP 107618 / JCM 11309 / KCTC 3954 / HTE831).